Consider the following 78-residue polypeptide: DNA-Binding protein G5P (78 aa).

It belongs to the inovirus G5P protein family. As to quaternary structure, homodimer.

In terms of biological role, binds to DNA in a highly cooperative manner without pronounced sequence specificity. During synthesis of the single-stranded (progeny) viral DNA, prevents the conversion into the double-stranded replicative form. G5P is displaced by the capsid protein G8P during phage assembly on the inner bacterial membrane. This chain is DNA-Binding protein G5P (V), found in Pseudomonas aeruginosa (Bacteriophage Pf3).